The chain runs to 331 residues: Ketol-acid reductoisomerase (NADP(+)) (331 aa).

The 181-residue stretch at 2–182 (AKLFYDSDAD…GGTRAGILET (181 aa)) folds into the KARI N-terminal Rossmann domain. Residues 25–28 (YGSQ), Ser-51, Ser-53, and 83–86 (DEFQ) each bind NADP(+). His-108 is an active-site residue. Residue Gly-134 coordinates NADP(+). In terms of domain architecture, KARI C-terminal knotted spans 183–328 (NFKEETETDL…KTLRSMFSWL (146 aa)). The Mg(2+) site is built by Asp-191, Glu-195, Glu-227, and Glu-231. Residue Ser-252 coordinates substrate.

The protein belongs to the ketol-acid reductoisomerase family. It depends on Mg(2+) as a cofactor.

It catalyses the reaction (2R)-2,3-dihydroxy-3-methylbutanoate + NADP(+) = (2S)-2-acetolactate + NADPH + H(+). The enzyme catalyses (2R,3R)-2,3-dihydroxy-3-methylpentanoate + NADP(+) = (S)-2-ethyl-2-hydroxy-3-oxobutanoate + NADPH + H(+). It participates in amino-acid biosynthesis; L-isoleucine biosynthesis; L-isoleucine from 2-oxobutanoate: step 2/4. The protein operates within amino-acid biosynthesis; L-valine biosynthesis; L-valine from pyruvate: step 2/4. Involved in the biosynthesis of branched-chain amino acids (BCAA). Catalyzes an alkyl-migration followed by a ketol-acid reduction of (S)-2-acetolactate (S2AL) to yield (R)-2,3-dihydroxy-isovalerate. In the isomerase reaction, S2AL is rearranged via a Mg-dependent methyl migration to produce 3-hydroxy-3-methyl-2-ketobutyrate (HMKB). In the reductase reaction, this 2-ketoacid undergoes a metal-dependent reduction by NADPH to yield (R)-2,3-dihydroxy-isovalerate. This Prochlorococcus marinus (strain NATL1A) protein is Ketol-acid reductoisomerase (NADP(+)).